The sequence spans 472 residues: Methanethiol oxidase (472 aa).

An N-acetylalanine modification is found at alanine 2. Residues serine 111, serine 371, and serine 467 each carry the phosphoserine modification.

The protein belongs to the selenium-binding protein family. Interacts with USP33. In terms of processing, phosphorylated. The N-terminus is blocked. Widely expressed. Highly expressed in liver, lung, colon, prostate, kidney and pancreas. In brain, present both in neurons and glia (at protein level). Down-regulated in lung adenocarcinoma, colorectal carcinoma and ovarian cancer. Two-fold up-regulated in brain and blood from schizophrenia patients.

It is found in the nucleus. The protein resides in the cytoplasm. The protein localises to the cytosol. It localises to the membrane. The catalysed reaction is methanethiol + O2 + H2O = hydrogen sulfide + formaldehyde + H2O2 + H(+). It functions in the pathway organosulfur degradation. Functionally, catalyzes the oxidation of methanethiol, an organosulfur compound known to be produced in substantial amounts by gut bacteria. Selenium-binding protein which may be involved in the sensing of reactive xenobiotics in the cytoplasm. May be involved in intra-Golgi protein transport. This Homo sapiens (Human) protein is Methanethiol oxidase (SELENBP1).